Reading from the N-terminus, the 98-residue chain is NADH-ubiquinone oxidoreductase chain 4L (98 aa).

3 helical membrane-spanning segments follow: residues 1–21 (MSIT…GMFV), 29–49 (SLLC…IVSL), and 61–81 (VILL…LIMV).

This sequence belongs to the complex I subunit 4L family. As to quaternary structure, core subunit of respiratory chain NADH dehydrogenase (Complex I) which is composed of 45 different subunits.

Its subcellular location is the mitochondrion inner membrane. It carries out the reaction a ubiquinone + NADH + 5 H(+)(in) = a ubiquinol + NAD(+) + 4 H(+)(out). Functionally, core subunit of the mitochondrial membrane respiratory chain NADH dehydrogenase (Complex I) which catalyzes electron transfer from NADH through the respiratory chain, using ubiquinone as an electron acceptor. Part of the enzyme membrane arm which is embedded in the lipid bilayer and involved in proton translocation. This Ochotona princeps (Southern American pika) protein is NADH-ubiquinone oxidoreductase chain 4L (MT-ND4L).